The sequence spans 212 residues: Putative 3-methyladenine DNA glycosylase (212 aa).

The protein belongs to the DNA glycosylase MPG family.

In Psychrobacter cryohalolentis (strain ATCC BAA-1226 / DSM 17306 / VKM B-2378 / K5), this protein is Putative 3-methyladenine DNA glycosylase.